Reading from the N-terminus, the 576-residue chain is Arginine--tRNA ligase (576 aa).

A 'HIGH' region motif is present at residues 122-132; that stretch reads PNVAKEMHVGH.

The protein belongs to the class-I aminoacyl-tRNA synthetase family. As to quaternary structure, monomer.

Its subcellular location is the cytoplasm. The catalysed reaction is tRNA(Arg) + L-arginine + ATP = L-arginyl-tRNA(Arg) + AMP + diphosphate. This is Arginine--tRNA ligase from Thermobifida fusca (strain YX).